The primary structure comprises 260 residues: 33 kDa inner dynein arm light chain, axonemal (260 aa).

Residues 1-66 are disordered; that stretch reads MIPPNASLVK…PVESQKAQQT (66 aa). Residues 177–260 adopt a coiled-coil conformation; the sequence is MRKALQAEQG…LEGIIAPNKK (84 aa).

Belongs to the inner dynein arm light chain family. Post-translationally, may undergo some post-translational modifications that shift its mobility on SDS gels.

Its function is as follows. May play a dynamic role in flagellar motility. The polypeptide is 33 kDa inner dynein arm light chain, axonemal (Strongylocentrotus purpuratus (Purple sea urchin)).